Here is a 419-residue protein sequence, read N- to C-terminus: MSLQATMTAMGQAARQGASALRVATPAQRTAALHAMAAAIRADAPAILAANAKDLEKAGAGGLTAPMVERLMLNPERLEDVAAGVEAVAAIPDPLGVETARWTRPNGLDIARVRTPIGVIAMIFESRPNVTADAAALCVRSGNAVILRGGSECIHSNLAIHAAIAKGLKAAGISSDAVQIVRTPDRDAVGAILGGLNRTIDLIIPRGGKSLVARVQAEARVAVLGHLEGLNHVFVHAAADPRKAVEIVLNAKMRRVSVCGSAETLLVDRAAAERLLPPIADALIKAGCELRGDGPSRAIEPTMKPAVEADWSTEYLAPVISVAVVDGVEGAAAHIAAYGSGHTDAIVTEDVAAAERFIALVDSAIVLVNASTQFADGGEFGFGAEIGIATDKLHARGPVGAEQLTTFKYVVRGTGQTRP.

It belongs to the gamma-glutamyl phosphate reductase family.

Its subcellular location is the cytoplasm. It carries out the reaction L-glutamate 5-semialdehyde + phosphate + NADP(+) = L-glutamyl 5-phosphate + NADPH + H(+). It participates in amino-acid biosynthesis; L-proline biosynthesis; L-glutamate 5-semialdehyde from L-glutamate: step 2/2. In terms of biological role, catalyzes the NADPH-dependent reduction of L-glutamate 5-phosphate into L-glutamate 5-semialdehyde and phosphate. The product spontaneously undergoes cyclization to form 1-pyrroline-5-carboxylate. The protein is Gamma-glutamyl phosphate reductase of Caulobacter sp. (strain K31).